Here is a 394-residue protein sequence, read N- to C-terminus: Elongation factor Tu 2 (394 aa).

The tr-type G domain maps to 10 to 204 (KPHVNVGTIG…FLDSYIPEPE (195 aa)). Residues 19–26 (GHVDHGKT) are G1. 19-26 (GHVDHGKT) is a GTP binding site. Mg(2+) is bound at residue threonine 26. The interval 60-64 (GITIN) is G2. The tract at residues 81-84 (DCPG) is G3. Residues 81–85 (DCPGH) and 136–139 (NKCD) contribute to the GTP site. The tract at residues 136–139 (NKCD) is G4. Residues 174-176 (SAL) are G5.

It belongs to the TRAFAC class translation factor GTPase superfamily. Classic translation factor GTPase family. EF-Tu/EF-1A subfamily. Monomer.

Its subcellular location is the cytoplasm. It catalyses the reaction GTP + H2O = GDP + phosphate + H(+). Functionally, GTP hydrolase that promotes the GTP-dependent binding of aminoacyl-tRNA to the A-site of ribosomes during protein biosynthesis. This Shigella flexneri serotype 5b (strain 8401) protein is Elongation factor Tu 2.